The following is a 138-amino-acid chain: Cysteine desulfuration protein SufE (138 aa).

Catalysis depends on Cys51, which acts as the Cysteine persulfide intermediate.

The protein belongs to the SufE family. As to quaternary structure, homodimer. Interacts with SufS.

Its subcellular location is the cytoplasm. The protein operates within cofactor biosynthesis; iron-sulfur cluster biosynthesis. Functionally, participates in cysteine desulfuration mediated by SufS. Cysteine desulfuration mobilizes sulfur from L-cysteine to yield L-alanine and constitutes an essential step in sulfur metabolism for biosynthesis of a variety of sulfur-containing biomolecules. Functions as a sulfur acceptor for SufS, by mediating the direct transfer of the sulfur atom from the S-sulfanylcysteine of SufS, an intermediate product of cysteine desulfuration process. The protein is Cysteine desulfuration protein SufE of Escherichia coli O157:H7.